The following is a 245-amino-acid chain: MIVDLNADLGEGCANDQALLQLVSSANIACGFHAGDAQTMRQSVRWALQYGVAIGAHPSFPDRENFGRTRMQLPAETVYAQVVYQLGALAAIARAEGGVMVHVKPHGMLYNQAAVEPELAQAIARAVKAVDPTLRLVGLAGSELIRAGEEQGLVTRQEVFADRGYQADGTLVPRGQPGALITSDELALAQTLEMVRHHRVRTLSGTWAAVQAETVCLHGDGEHALEYARTLRERFAVEGISVSAQ.

The protein belongs to the LamB/PxpA family. In terms of assembly, forms a complex composed of PxpA, PxpB and PxpC.

The enzyme catalyses 5-oxo-L-proline + ATP + 2 H2O = L-glutamate + ADP + phosphate + H(+). In terms of biological role, catalyzes the cleavage of 5-oxoproline to form L-glutamate coupled to the hydrolysis of ATP to ADP and inorganic phosphate. The sequence is that of 5-oxoprolinase subunit A from Serratia proteamaculans (strain 568).